Here is a 1112-residue protein sequence, read N- to C-terminus: Glutamate receptor-interacting protein 1 (1112 aa).

Serine 43 carries the post-translational modification Phosphoserine. 6 consecutive PDZ domains span residues 53 to 136 (VVEL…EYEL), 150 to 238 (TVEV…EYDV), 252 to 336 (LVEV…LPHH), 471 to 560 (EVVL…EFDV), 572 to 657 (HVKL…RKDE), and 672 to 754 (TVEL…KKQT). Disordered regions lie at residues 752 to 796 (KQTD…VYPS), 841 to 886 (KRAS…AEQE), and 922 to 963 (NHEA…DVGR). Residues 869–880 (STASGFAGASDS) are compositionally biased toward low complexity. The segment covering 928 to 958 (ARSQLGRQASFQERSNSRPHYSQTTRSNTLP) has biased composition (polar residues). Residues 988-1070 (KVTLYKDSGM…KLDLVISRNP (83 aa)) form the PDZ 7 domain. Positions 1077 to 1112 (IEQPALPSDWSEQNSAFFQQPSHGGNLETREPTNTL) are disordered. The span at 1086-1099 (WSEQNSAFFQQPSH) shows a compositional bias: polar residues.

Interacts with EFNB1, EPHA7, EPHB2, EFNB3, KIF5A, KIF5C, KIF5B and the C-terminal tail of PRLHR. Forms a ternary complex with GRIA2 and CSPG4. Can form homomultimers or heteromultimers with GRIP2. Interacts with GRIA2, GRIA3, GRIPAP1/GRASP1, PPFIA1, PPFIA4, FRAS1, PLCD4, PTPRF and liprins-alpha. Interacts with ATAD1 in an ATP-dependent manner. ATAD1-catalyzed ATP hydrolysis disrupts binding to ATAD1 and to GRIA2 and leads to AMPAR complex disassembly. Interacts with SLC30A9. Interacts with BUD23. Forms a complex with NSG1, GRIA2 and STX12; controls the intracellular fate of AMPAR and the endosomal sorting of the GRIA2 subunit toward recycling and membrane targeting. Interacts with NSG1. Expressed in brain, testis and retina. In brain highly expressed in the olfactory bulb, cortex and hippocampus and lower level in thalamus, cerebellum and spinal cord. In brain it is found in the perikaryon, dendrites, dendritic shafts, dendritic spines and, excitatory and inhibitory synapses of neurons. In retina, it is most abundant in the plexiform layers than in perikarya.

The protein resides in the cytoplasmic vesicle. The protein localises to the perikaryon. Its subcellular location is the cell projection. It localises to the dendrite. It is found in the cytoplasm. The protein resides in the endomembrane system. The protein localises to the postsynaptic cell membrane. Its subcellular location is the postsynaptic density. It localises to the endoplasmic reticulum membrane. May play a role as a localized scaffold for the assembly of a multiprotein signaling complex and as mediator of the trafficking of its binding partners at specific subcellular location in neurons. Through complex formation with NSG1, GRIA2 and STX12 controls the intracellular fate of AMPAR and the endosomal sorting of the GRIA2 subunit toward recycling and membrane targeting. The sequence is that of Glutamate receptor-interacting protein 1 (Grip1) from Rattus norvegicus (Rat).